A 119-amino-acid chain; its full sequence is Large ribosomal subunit protein bL19 (119 aa).

Belongs to the bacterial ribosomal protein bL19 family.

Functionally, this protein is located at the 30S-50S ribosomal subunit interface and may play a role in the structure and function of the aminoacyl-tRNA binding site. This is Large ribosomal subunit protein bL19 from Pseudoalteromonas atlantica (strain T6c / ATCC BAA-1087).